Here is a 1017-residue protein sequence, read N- to C-terminus: Multiple C2 domain and transmembrane region protein 14 (1017 aa).

In terms of domain architecture, C2 1 spans 1-110; it reads MADNVLRKLI…ASAGSETLVY (110 aa). A disordered region spans residues 139-231; it reads AAPAATEPKP…PAEVKNPPIP (93 aa). Positions 141–153 are enriched in low complexity; sequence PAATEPKPEAAAA. A compositionally biased stretch (basic and acidic residues) spans 154-213; that stretch reads TEEKPPEIAKAEDGKKETEAAKTEEKKEGDKKEEEKPKEEAKPDEKKPDAPPDTKAKKPD. Over residues 217–231 the composition is skewed to pro residues; it reads APPPPPAEVKNPPIP. C2 domains lie at 258-387, 420-554, and 587-714; these read DLEL…PQWY, DSGG…SRWF, and VTSD…LNSY. 5 residues coordinate Ca(2+): aspartate 296, asparagine 299, aspartate 352, threonine 355, and glutamate 359. 2 consecutive transmembrane segments (helical) span residues 851 to 871 and 957 to 977; these read VAIVLCPHLVLPTVFMYAFLI and ATCIFVVFCLFASFLFYIVPF.

This sequence belongs to the MCTP family. Requires Ca(2+) as cofactor. Expressed in incipient leaf primordia and in roots meristems. Observed in flowers.

The protein localises to the membrane. Its subcellular location is the vesicle. It localises to the golgi apparatus membrane. In terms of biological role, may function as a signaling molecule by regulating the trafficking of other regulators. In Arabidopsis thaliana (Mouse-ear cress), this protein is Multiple C2 domain and transmembrane region protein 14.